The chain runs to 113 residues: UPF0145 protein TK1926 (113 aa).

The protein belongs to the UPF0145 family.

This Thermococcus kodakarensis (strain ATCC BAA-918 / JCM 12380 / KOD1) (Pyrococcus kodakaraensis (strain KOD1)) protein is UPF0145 protein TK1926.